A 201-amino-acid polypeptide reads, in one-letter code: MKSTGEATAINIGETKSASATTVATTKAIQHPKAGLKRGLAIFDFILRLSAIGAALAATTTMGTTDQTLPFFTQFFQFQASYDDLPAFSFFVIANAIASGYLFLSLPFSIVCIVRPHAMGARLLLVICDTVMVALTIAAAAAAAAIVYLAHNGNSNANWVAICQQFDDFCQSVSGAVVASFIAAVLFMLMIVLSAFSLRKH.

Residues 1–38 (MKSTGEATAINIGETKSASATTVATTKAIQHPKAGLKR) lie on the Cytoplasmic side of the membrane. Residues 39–59 (GLAIFDFILRLSAIGAALAAT) traverse the membrane as a helical segment. At 60–89 (TTMGTTDQTLPFFTQFFQFQASYDDLPAFS) the chain is on the extracellular side. The chain crosses the membrane as a helical span at residues 90–110 (FFVIANAIASGYLFLSLPFSI). Topologically, residues 111–129 (VCIVRPHAMGARLLLVICD) are cytoplasmic. Residues 130–150 (TVMVALTIAAAAAAAAIVYLA) traverse the membrane as a helical segment. Residues 151-175 (HNGNSNANWVAICQQFDDFCQSVSG) lie on the Extracellular side of the membrane. Residues 176–196 (AVVASFIAAVLFMLMIVLSAF) traverse the membrane as a helical segment. The Cytoplasmic portion of the chain corresponds to 197–201 (SLRKH).

Belongs to the Casparian strip membrane proteins (CASP) family. In terms of assembly, homodimer and heterodimers.

The protein localises to the cell membrane. Functionally, regulates membrane-cell wall junctions and localized cell wall deposition. Required for establishment of the Casparian strip membrane domain (CSD) and the subsequent formation of Casparian strips, a cell wall modification of the root endodermis that determines an apoplastic barrier between the intraorganismal apoplasm and the extraorganismal apoplasm and prevents lateral diffusion. The protein is Casparian strip membrane protein 2 of Vitis vinifera (Grape).